A 386-amino-acid chain; its full sequence is Protein phosphatase methylesterase 1 (386 aa).

A disordered region spans residues 1 to 38 (MSALEKSMHLGRLPSRPPLPGSGGSQSGAKMRMGPGRK). Ser-15 bears the Phosphoserine mark. Asymmetric dimethylarginine; alternate is present on Arg-16. Position 16 is an omega-N-methylarginine; alternate (Arg-16). Catalysis depends on residues Ser-156 and Asp-181. Over residues 255-265 (IEEEEEDEEGS) the composition is skewed to acidic residues. Positions 255-280 (IEEEEEDEEGSESVNKRKKEDDMETK) are disordered. Positions 268–280 (VNKRKKEDDMETK) are enriched in basic and acidic residues. The active site involves His-349.

It belongs to the AB hydrolase superfamily. In terms of assembly, binds PPP2CA and PPP2CB. In terms of processing, phosphorylated by SIK1 following increases in intracellular sodium, leading to dissociation from the protein phosphatase 2A (PP2A) complex and subsequent dephosphorylation of sodium/potassium-transporting ATPase ATP1A1. Ubiquitous. Highly expressed in testis and brain.

It carries out the reaction [phosphatase 2A protein]-C-terminal L-leucine methyl ester + H2O = [phosphatase 2A protein]-C-terminal L-leucine + methanol + H(+). Its function is as follows. Demethylates proteins that have been reversibly carboxymethylated. Demethylates PPP2CB (in vitro) and PPP2CA. Binding to PPP2CA displaces the manganese ion and inactivates the enzyme. This Mus musculus (Mouse) protein is Protein phosphatase methylesterase 1 (Ppme1).